Reading from the N-terminus, the 353-residue chain is RNA 3'-terminal phosphate cyclase (353 aa).

ATP-binding positions include Gln-100 and His-285–Gln-289. Residue His-311 is the Tele-AMP-histidine intermediate of the active site.

The protein belongs to the RNA 3'-terminal cyclase family. Type 1 subfamily.

It localises to the cytoplasm. It carries out the reaction a 3'-end 3'-phospho-ribonucleotide-RNA + ATP = a 3'-end 2',3'-cyclophospho-ribonucleotide-RNA + AMP + diphosphate. Its function is as follows. Catalyzes the conversion of 3'-phosphate to a 2',3'-cyclic phosphodiester at the end of RNA. The mechanism of action of the enzyme occurs in 3 steps: (A) adenylation of the enzyme by ATP; (B) transfer of adenylate to an RNA-N3'P to produce RNA-N3'PP5'A; (C) and attack of the adjacent 2'-hydroxyl on the 3'-phosphorus in the diester linkage to produce the cyclic end product. The biological role of this enzyme is unknown but it is likely to function in some aspects of cellular RNA processing. The protein is RNA 3'-terminal phosphate cyclase of Nitrosospira multiformis (strain ATCC 25196 / NCIMB 11849 / C 71).